We begin with the raw amino-acid sequence, 458 residues long: Tetracycline resistance protein (458 aa).

12 helical membrane-spanning segments follow: residues 12–33, 81–100, 111–129, 140–162, 165–185, 201–221, 223–240, 256–276, 297–317, 324–344, 346–365, and 432–451; these read HNQV…EMVL, LLLF…FVGH, FIQG…VVVA, AFGL…GGMV, YIHW…VPFL, MAGI…TTSY, FSFL…VQHI, VFFV…AGFV, GIIF…GLLV, YVLT…AFFI, AAPW…LSFT, and MLIL…LNVY.

Belongs to the major facilitator superfamily. TCR/Tet family.

It is found in the cell membrane. Its function is as follows. Resistance to tetracycline by an active tetracycline efflux. This is an energy-dependent process that decreases the accumulation of the antibiotic in whole cells. This protein functions as a metal-tetracycline/H(+) antiporter. This Bacillus subtilis (strain 168) protein is Tetracycline resistance protein (tetB).